Here is a 746-residue protein sequence, read N- to C-terminus: Root phototropism protein 3 (746 aa).

The disordered stretch occupies residues 1–24 (MMWESESDGGVGVGGGGGREYGDG). Residues 9-19 (GGVGVGGGGGR) show a composition bias toward gly residues. Residues 54–122 (SDLLVKIGDM…CYGVPVDLTA (69 aa)) form the BTB domain. Positions 250 to 605 (DWWFEDVSIL…VQVLFSEQVK (356 aa)) constitute an NPH3 domain. A disordered region spans residues 461–500 (EQTEGSSPSRMSPSPSQSMYADIPRGNNNNGGGGGGNNQN). The segment covering 466-478 (SSPSRMSPSPSQS) has biased composition (low complexity). Tyr546 carries the post-translational modification Phosphotyrosine. The interval 708-746 (SKLTKMSGQESHDISSGGEQAGVDHPPPRKPRRWRNSIS) is disordered. The span at 735-746 (PRKPRRWRNSIS) shows a compositional bias: basic residues.

It belongs to the NPH3 family. In terms of assembly, interacts with PKS1, PKS2, RPT2, PHOT1 and PHOT2. Subunit of a complex made of CAR6, PHOT1 and RPT3/NPH3. In terms of processing, phosphorylated in the dark. In terms of tissue distribution, expressed in hypocotyls, guard cells and mesophyll cells.

The protein localises to the cell membrane. The protein operates within protein modification; protein ubiquitination. May act as a substrate-specific adapter of an E3 ubiquitin-protein ligase complex (CUL3-RBX1-BTB) which mediates the ubiquitination and subsequent proteasomal degradation of target proteins. Signal transducer of the phototropic response and photo-induced movements. Involved in the phot1 pathway under low blue light (LBL) fluence rate and in the phot2 pathway under higher fluence rate of blue light (HBL). Necessary for root and hypocotyl phototropisms, but not for the regulation of stomata opening. Not involved in chloroplast accumulation and translocation. The protein is Root phototropism protein 3 (RPT3) of Arabidopsis thaliana (Mouse-ear cress).